A 439-amino-acid polypeptide reads, in one-letter code: Serine/threonine-protein kinase 2 (439 aa).

In terms of domain architecture, Protein kinase spans 87-439; that stretch reads NDDFYHISTG…IFSDWINGRN (353 aa). ATP is bound by residues 93–101 and Lys-117; that span reads ISTGGYGIV. Catalysis depends on Asp-307, which acts as the Proton acceptor.

This sequence belongs to the protein kinase superfamily. Ser/Thr protein kinase family. Post-translationally, phosphorylated in vivo. Autophosphorylated in vitro.

Its subcellular location is the host endoplasmic reticulum. The protein resides in the host endoplasmic reticulum-Golgi intermediate compartment. It carries out the reaction L-seryl-[protein] + ATP = O-phospho-L-seryl-[protein] + ADP + H(+). The enzyme catalyses L-threonyl-[protein] + ATP = O-phospho-L-threonyl-[protein] + ADP + H(+). Functionally, essential serine-protein kinase involved in the early stage of virion morphogenesis. This is Serine/threonine-protein kinase 2 (OPG054) from Monkeypox virus.